We begin with the raw amino-acid sequence, 298 residues long: Adaptation to cold protein C (298 aa).

As to quaternary structure, interacts with the C-terminal extension of AtcJ. Also interacts with AtcB, but not with AtcA.

Interaction with AtcJ stabilizes AtcC. Its function is as follows. Involved in cold adaptation. The sequence is that of Adaptation to cold protein C from Shewanella oneidensis (strain ATCC 700550 / JCM 31522 / CIP 106686 / LMG 19005 / NCIMB 14063 / MR-1).